Here is a 154-residue protein sequence, read N- to C-terminus: Interleukin-2 (154 aa).

Positions 1–20 (MYRMQLLSCIALSLALITNS) are cleaved as a signal peptide. A glycan (O-linked (GalNAc...) threonine) is linked at Thr-23. Cys-78 and Cys-126 are oxidised to a cystine.

Belongs to the IL-2 family.

Its subcellular location is the secreted. Functionally, cytokine produced by activated CD4-positive helper T-cells and to a lesser extend activated CD8-positive T-cells and natural killer (NK) cells that plays pivotal roles in the immune response and tolerance. Binds to a receptor complex composed of either the high-affinity trimeric IL-2R (IL2RA/CD25, IL2RB/CD122 and IL2RG/CD132) or the low-affinity dimeric IL-2R (IL2RB and IL2RG). Interaction with the receptor leads to oligomerization and conformation changes in the IL-2R subunits resulting in downstream signaling starting with phosphorylation of JAK1 and JAK3. In turn, JAK1 and JAK3 phosphorylate the receptor to form a docking site leading to the phosphorylation of several substrates including STAT5. This process leads to activation of several pathways including STAT, phosphoinositide-3-kinase/PI3K and mitogen-activated protein kinase/MAPK pathways. Functions as a T-cell growth factor and can increase NK-cell cytolytic activity as well. Promotes strong proliferation of activated B-cells and subsequently immunoglobulin production. Plays a pivotal role in regulating the adaptive immune system by controlling the survival and proliferation of regulatory T-cells, which are required for the maintenance of immune tolerance. Moreover, participates in the differentiation and homeostasis of effector T-cell subsets, including Th1, Th2, Th17 as well as memory CD8-positive T-cells. The polypeptide is Interleukin-2 (IL2) (Saimiri sciureus (Common squirrel monkey)).